Reading from the N-terminus, the 467-residue chain is Methylenetetrahydrofolate--tRNA-(uracil-5-)-methyltransferase TrmFO (467 aa).

11-16 (GAGLAG) is an FAD binding site.

It belongs to the MnmG family. TrmFO subfamily. FAD serves as cofactor.

The protein localises to the cytoplasm. It catalyses the reaction uridine(54) in tRNA + (6R)-5,10-methylene-5,6,7,8-tetrahydrofolate + NADH + H(+) = 5-methyluridine(54) in tRNA + (6S)-5,6,7,8-tetrahydrofolate + NAD(+). It carries out the reaction uridine(54) in tRNA + (6R)-5,10-methylene-5,6,7,8-tetrahydrofolate + NADPH + H(+) = 5-methyluridine(54) in tRNA + (6S)-5,6,7,8-tetrahydrofolate + NADP(+). Functionally, catalyzes the folate-dependent formation of 5-methyl-uridine at position 54 (M-5-U54) in all tRNAs. This is Methylenetetrahydrofolate--tRNA-(uracil-5-)-methyltransferase TrmFO from Prochlorococcus marinus (strain MIT 9303).